We begin with the raw amino-acid sequence, 183 residues long: Inosine/xanthosine triphosphatase (183 aa).

Residue Asp-75 participates in Mg(2+) binding. 75 to 76 (DG) is a substrate binding site.

It belongs to the YjjX NTPase family. Homodimer. The cofactor is Mg(2+). Mn(2+) is required as a cofactor.

It carries out the reaction XTP + H2O = XDP + phosphate + H(+). It catalyses the reaction ITP + H2O = IDP + phosphate + H(+). Its function is as follows. Phosphatase that hydrolyzes non-canonical purine nucleotides such as XTP and ITP to their respective diphosphate derivatives. Probably excludes non-canonical purines from DNA/RNA precursor pool, thus preventing their incorporation into DNA/RNA and avoiding chromosomal lesions. The polypeptide is Inosine/xanthosine triphosphatase (Vibrio vulnificus (strain YJ016)).